The sequence spans 50 residues: uncharacterized protein (50 aa).

This is an uncharacterized protein from Dryophytes versicolor (chameleon treefrog).